We begin with the raw amino-acid sequence, 186 residues long: Adenylate kinase isoenzyme 6 homolog (186 aa).

Residues glycine 15, glycine 17, lysine 18, serine 19, and threonine 20 each contribute to the ATP site. The NMPbind stretch occupies residues asparagine 48–tyrosine 71. Positions lysine 126–asparagine 136 are LID. Arginine 127 is an ATP binding site.

This sequence belongs to the adenylate kinase family. AK6 subfamily. In terms of assembly, monomer and homodimer. Interacts with small ribosomal subunit protein uS11. Not a structural component of 43S pre-ribosomes, but transiently interacts with them by binding to uS11.

It localises to the cytoplasm. Its subcellular location is the nucleus. It catalyses the reaction AMP + ATP = 2 ADP. The enzyme catalyses ATP + H2O = ADP + phosphate + H(+). Functionally, broad-specificity nucleoside monophosphate (NMP) kinase that catalyzes the reversible transfer of the terminal phosphate group between nucleoside triphosphates and monophosphates. Also has ATPase activity. Involved in the late cytoplasmic maturation steps of the 40S ribosomal particles, specifically 18S rRNA maturation. While NMP activity is not required for ribosome maturation, ATPase activity is. Associates transiently with small ribosomal subunit protein uS11. ATP hydrolysis breaks the interaction with uS11. May temporarily remove uS11 from the ribosome to enable a conformational change of the ribosomal RNA that is needed for the final maturation step of the small ribosomal subunit. Its NMP activity may have a role in nuclear energy homeostasis. The sequence is that of Adenylate kinase isoenzyme 6 homolog from Plasmodium falciparum (isolate 3D7).